Reading from the N-terminus, the 176-residue chain is Lipocalin-1 (176 aa).

An N-terminal signal peptide occupies residues 1 to 19; that stretch reads MMRALLLAIGLGLVAALQA. An intrachain disulfide couples cysteine 80 to cysteine 171.

It belongs to the calycin superfamily. Lipocalin family. As to quaternary structure, predominantly monomer. May form homodimer. Interacts with LMBR1L; this interaction mediates the endocytosis of LCN1.

The protein localises to the secreted. Could play a role in taste reception. Could be necessary for the concentration and delivery of sapid molecules in the gustatory system. Can bind various ligands, with chemical structures ranging from lipids and retinoids to the macrocyclic antibiotic rifampicin and even to microbial siderophores. Exhibits an extremely wide ligand pocket. The sequence is that of Lipocalin-1 (LCN1) from Sus scrofa (Pig).